A 336-amino-acid chain; its full sequence is Fructose-1,6-bisphosphatase class 1 (336 aa).

Mg(2+)-binding residues include glutamate 90, aspartate 112, leucine 114, and aspartate 115. Substrate is bound by residues 115–118, asparagine 211, and lysine 277; that span reads DGSS. Glutamate 283 contributes to the Mg(2+) binding site.

This sequence belongs to the FBPase class 1 family. Homotetramer. Requires Mg(2+) as cofactor.

It localises to the cytoplasm. The enzyme catalyses beta-D-fructose 1,6-bisphosphate + H2O = beta-D-fructose 6-phosphate + phosphate. Its pathway is carbohydrate biosynthesis; gluconeogenesis. The polypeptide is Fructose-1,6-bisphosphatase class 1 (Pseudomonas putida (strain GB-1)).